The primary structure comprises 291 residues: N-acetylmannosamine kinase (291 aa).

Residues 5-12 and 132-139 each bind ATP; these read AIDIGGTK and GVGGGVVS. The Zn(2+) site is built by His156, Cys166, Cys168, and Cys173.

It belongs to the ROK (NagC/XylR) family. NanK subfamily. As to quaternary structure, homodimer.

The enzyme catalyses an N-acyl-D-mannosamine + ATP = an N-acyl-D-mannosamine 6-phosphate + ADP + H(+). The protein operates within amino-sugar metabolism; N-acetylneuraminate degradation; D-fructose 6-phosphate from N-acetylneuraminate: step 2/5. In terms of biological role, catalyzes the phosphorylation of N-acetylmannosamine (ManNAc) to ManNAc-6-P. The sequence is that of N-acetylmannosamine kinase from Escherichia fergusonii (strain ATCC 35469 / DSM 13698 / CCUG 18766 / IAM 14443 / JCM 21226 / LMG 7866 / NBRC 102419 / NCTC 12128 / CDC 0568-73).